The primary structure comprises 177 residues: Large ribosomal subunit protein uL6 (177 aa).

Belongs to the universal ribosomal protein uL6 family. Part of the 50S ribosomal subunit.

Its function is as follows. This protein binds to the 23S rRNA, and is important in its secondary structure. It is located near the subunit interface in the base of the L7/L12 stalk, and near the tRNA binding site of the peptidyltransferase center. In Methylorubrum populi (strain ATCC BAA-705 / NCIMB 13946 / BJ001) (Methylobacterium populi), this protein is Large ribosomal subunit protein uL6.